Here is a 285-residue protein sequence, read N- to C-terminus: Prephenate dehydratase (285 aa).

The Prephenate dehydratase domain occupies 2–183 (KVGYLGPAAT…NHTRFVILSP (182 aa)). The ACT domain maps to 204 to 281 (MVMLPQDDQS…CKVRLLGAYQ (78 aa)).

It catalyses the reaction prephenate + H(+) = 3-phenylpyruvate + CO2 + H2O. It participates in amino-acid biosynthesis; L-phenylalanine biosynthesis; phenylpyruvate from prephenate: step 1/1. The protein is Prephenate dehydratase (pheA) of Bacillus subtilis (strain 168).